The chain runs to 121 residues: uncharacterized protein (121 aa).

The helical transmembrane segment at 9–29 (LTILIASIYIIFFVNAAPTLY) threads the bilayer. The disordered stretch occupies residues 91–121 (EELPTYPPTMTTPLETTPLDTSPPVLPSAIP). The span at 98-113 (PTMTTPLETTPLDTSP) shows a compositional bias: low complexity.

The protein resides in the host membrane. This is an uncharacterized protein from Alcelaphine herpesvirus 1 (strain C500) (AlHV-1).